The chain runs to 472 residues: Argininosuccinate lyase (472 aa).

This sequence belongs to the lyase 1 family. Argininosuccinate lyase subfamily.

The protein localises to the cytoplasm. It carries out the reaction 2-(N(omega)-L-arginino)succinate = fumarate + L-arginine. Its pathway is amino-acid biosynthesis; L-arginine biosynthesis; L-arginine from L-ornithine and carbamoyl phosphate: step 3/3. The protein is Argininosuccinate lyase of Polynucleobacter necessarius subsp. necessarius (strain STIR1).